Here is a 401-residue protein sequence, read N- to C-terminus: CinA-like protein (401 aa).

Belongs to the CinA family.

This chain is CinA-like protein, found in Thermosipho melanesiensis (strain DSM 12029 / CIP 104789 / BI429).